The sequence spans 447 residues: Phosphoglucosamine mutase (447 aa).

Residue Ser-100 is the Phosphoserine intermediate of the active site. The Mg(2+) site is built by Ser-100, Asp-240, Asp-242, and Asp-244. Ser-100 carries the post-translational modification Phosphoserine.

Belongs to the phosphohexose mutase family. The cofactor is Mg(2+). In terms of processing, activated by phosphorylation.

The enzyme catalyses alpha-D-glucosamine 1-phosphate = D-glucosamine 6-phosphate. In terms of biological role, catalyzes the conversion of glucosamine-6-phosphate to glucosamine-1-phosphate. The sequence is that of Phosphoglucosamine mutase from Clostridium botulinum (strain Alaska E43 / Type E3).